Reading from the N-terminus, the 130-residue chain is MRHRKSGRQLNRSSTHLNSMLKNMACSLFTHEVIKTTLSKAKELRRIVEPIITLSKIDTVSHRRLVFSRIRDNAIVAKLFKKLGPCFFSRLGGYTRILKCGFRSGDKAPMAYIELVDRVKNNKKNEILKK.

It belongs to the bacterial ribosomal protein bL17 family. In terms of assembly, part of the 50S ribosomal subunit. Contacts protein L32.

The polypeptide is Large ribosomal subunit protein bL17 (Buchnera aphidicola subsp. Acyrthosiphon pisum (strain 5A)).